We begin with the raw amino-acid sequence, 500 residues long: Histidinol dehydrogenase homolog 1 (500 aa).

The tract at residues 1 to 25 is disordered; that stretch reads MPPAGGIFHRPPTTRKSRRLTPRSA. A compositionally biased stretch (basic residues) spans 12–21; the sequence is PTTRKSRRLT. 2 residues coordinate Zn(2+): Gln313 and His316. Catalysis depends on proton acceptor residues Glu381 and His382. Residues Asp415 and His475 each coordinate Zn(2+).

The protein belongs to the histidinol dehydrogenase family. Zn(2+) serves as cofactor.

In Mesorhizobium japonicum (strain LMG 29417 / CECT 9101 / MAFF 303099) (Mesorhizobium loti (strain MAFF 303099)), this protein is Histidinol dehydrogenase homolog 1.